We begin with the raw amino-acid sequence, 207 residues long: Small ribosomal subunit protein uS4 (207 aa).

Residues 31-54 (KSKFETKPGQHGRTSGSRTSDFGL) form a disordered region. The segment covering 42 to 52 (GRTSGSRTSDF) has biased composition (polar residues). One can recognise an S4 RNA-binding domain in the interval 97 to 158 (SRLDNVVYRM…KAKKQLRVTE (62 aa)).

It belongs to the universal ribosomal protein uS4 family. Part of the 30S ribosomal subunit. Contacts protein S5. The interaction surface between S4 and S5 is involved in control of translational fidelity.

Functionally, one of the primary rRNA binding proteins, it binds directly to 16S rRNA where it nucleates assembly of the body of the 30S subunit. Its function is as follows. With S5 and S12 plays an important role in translational accuracy. The sequence is that of Small ribosomal subunit protein uS4 from Methylibium petroleiphilum (strain ATCC BAA-1232 / LMG 22953 / PM1).